Reading from the N-terminus, the 452-residue chain is Pup--protein ligase (452 aa).

Glu-9 lines the Mg(2+) pocket. Arg-53 contacts ATP. Residue Tyr-55 participates in Mg(2+) binding. Asp-57 serves as the catalytic Proton acceptor. Mg(2+) is bound at residue Glu-63. ATP is bound by residues Thr-66 and Trp-419.

Belongs to the Pup ligase/Pup deamidase family. Pup-conjugating enzyme subfamily.

It catalyses the reaction ATP + [prokaryotic ubiquitin-like protein]-L-glutamate + [protein]-L-lysine = ADP + phosphate + N(6)-([prokaryotic ubiquitin-like protein]-gamma-L-glutamyl)-[protein]-L-lysine.. The protein operates within protein degradation; proteasomal Pup-dependent pathway. It participates in protein modification; protein pupylation. Catalyzes the covalent attachment of the prokaryotic ubiquitin-like protein modifier Pup to the proteasomal substrate proteins, thereby targeting them for proteasomal degradation. This tagging system is termed pupylation. The ligation reaction involves the side-chain carboxylate of the C-terminal glutamate of Pup and the side-chain amino group of a substrate lysine. This chain is Pup--protein ligase, found in Mycolicibacterium vanbaalenii (strain DSM 7251 / JCM 13017 / BCRC 16820 / KCTC 9966 / NRRL B-24157 / PYR-1) (Mycobacterium vanbaalenii).